Consider the following 445-residue polypeptide: Phosphoglucosamine mutase (445 aa).

The active-site Phosphoserine intermediate is serine 102. Mg(2+)-binding residues include serine 102, aspartate 241, aspartate 243, and aspartate 245. Serine 102 bears the Phosphoserine mark.

It belongs to the phosphohexose mutase family. The cofactor is Mg(2+). Post-translationally, activated by phosphorylation.

It carries out the reaction alpha-D-glucosamine 1-phosphate = D-glucosamine 6-phosphate. Functionally, catalyzes the conversion of glucosamine-6-phosphate to glucosamine-1-phosphate. This is Phosphoglucosamine mutase from Proteus mirabilis (strain HI4320).